We begin with the raw amino-acid sequence, 648 residues long: Replication restart protein PriA (648 aa).

One can recognise a Helicase ATP-binding domain in the interval 131-297 (TILNESNKPT…KTHKYQLVTL (167 aa)). 144–151 (GVTGSGKT) contributes to the ATP binding site. The DEAH box motif lies at 240 to 243 (DEEH). Residues Cys358, Cys361, Cys367, Cys370, Cys385, Cys388, Cys398, and Cys401 each contribute to the Zn(2+) site. In terms of domain architecture, Helicase C-terminal spans 375–548 (VLHKATKKLE…RFFTNELEIR (174 aa)).

The protein belongs to the helicase family. PriA subfamily. In terms of assembly, component of the replication restart primosome. It depends on Zn(2+) as a cofactor.

It catalyses the reaction Couples ATP hydrolysis with the unwinding of duplex DNA by translocating in the 3'-5' direction.. The catalysed reaction is ATP + H2O = ADP + phosphate + H(+). Its function is as follows. Initiates the restart of stalled replication forks, which reloads the replicative helicase on sites other than the origin of replication. Recognizes and binds to abandoned replication forks and remodels them to uncover a helicase loading site. Promotes assembly of the primosome at these replication forks. This Rickettsia prowazekii (strain Madrid E) protein is Replication restart protein PriA.